Reading from the N-terminus, the 514-residue chain is Citrate synthase 2, peroxisomal (514 aa).

Active-site residues include histidine 324, histidine 363, and aspartate 419.

This sequence belongs to the citrate synthase family. In terms of tissue distribution, widely expressed. Expressed throughout the shoot. Expressed in flower, silique, stem, cauline leaf, young leaf, mature leaf and senescent leaf.

The protein localises to the peroxisome. The enzyme catalyses oxaloacetate + acetyl-CoA + H2O = citrate + CoA + H(+). It functions in the pathway carbohydrate metabolism; tricarboxylic acid cycle; isocitrate from oxaloacetate: step 1/2. Peroxisomal citrate synthase required for the fatty acid respiration in seedlings, citrate being exported from peroxisomes into mitochondria during respiration of triacylglycerol (TAG). Indeed, complete respiration requires the transfer of carbon in the form of citrate from the peroxisome to the mitochondria. The chain is Citrate synthase 2, peroxisomal (CSY2) from Arabidopsis thaliana (Mouse-ear cress).